A 207-amino-acid chain; its full sequence is MARYLGPKAKLARREGTDLFLKSARRALSDKCRLDNKPGQDGRTSGSRTSDYGNQLREKQKVKRIYGVLERQFRRYFAEAERRKGNTGETLLQLLESRLDNVVYRMGFGSTRAEARQLVSHCAILLNGNPVNIPSIQVKPGDVVAIREKAKKQARITESLNLVGQMAAVTWVSVDVAKLEGTFKQVPDREDISGEINESLIVELYSR.

Basic and acidic residues predominate over residues 31 to 40; the sequence is KCRLDNKPGQ. The interval 31-56 is disordered; that stretch reads KCRLDNKPGQDGRTSGSRTSDYGNQL. Residues 42-53 show a composition bias toward polar residues; sequence GRTSGSRTSDYG. The S4 RNA-binding domain maps to 97-158; it reads SRLDNVVYRM…KAKKQARITE (62 aa).

Belongs to the universal ribosomal protein uS4 family. In terms of assembly, part of the 30S ribosomal subunit. Contacts protein S5. The interaction surface between S4 and S5 is involved in control of translational fidelity.

One of the primary rRNA binding proteins, it binds directly to 16S rRNA where it nucleates assembly of the body of the 30S subunit. In terms of biological role, with S5 and S12 plays an important role in translational accuracy. The sequence is that of Small ribosomal subunit protein uS4 from Polynucleobacter necessarius subsp. necessarius (strain STIR1).